Here is a 213-residue protein sequence, read N- to C-terminus: Ribonuclease Oy (213 aa).

Residue histidine 35 is part of the active site. Cysteine 51 and cysteine 96 are joined by a disulfide. A glycan (N-linked (GlcNAc...) asparagine) is linked at asparagine 52. Residues glutamate 89 and histidine 93 contribute to the active site. 2 N-linked (GlcNAc...) asparagine glycosylation sites follow: asparagine 121 and asparagine 142. 2 cysteine pairs are disulfide-bonded: cysteine 160-cysteine 198 and cysteine 178-cysteine 188.

Belongs to the RNase T2 family.

Its subcellular location is the secreted. Releases mononucleotides from RNA in the order of 3'-GMP, 3'-AMP and 3'-UMP. The polypeptide is Ribonuclease Oy (Magallana gigas (Pacific oyster)).